Reading from the N-terminus, the 329-residue chain is UPF0725 protein EMB2204 (329 aa).

The protein belongs to the UPF0725 (EMB2204) family.

Its function is as follows. May be involved in embryogenesis. The polypeptide is UPF0725 protein EMB2204 (EMB2204) (Arabidopsis thaliana (Mouse-ear cress)).